Reading from the N-terminus, the 144-residue chain is MEKFSNIAQLKDSGLKVTGPRLKILDLFEKHAEEHLSAEDVYRILLEEGVEIGVATIYRVLTQFEQAGILQRHHFETGKAVYELDKGDHHDHIVCVKCGEVTEFHNPEIEALQDKIAEENGYRIVDHALYMYGVCSDCQAKGKR.

The segment at 1–86 (MEKFSNIAQL…TGKAVYELDK (86 aa)) is DNA-binding. Zn(2+) is bound by residues His35 and Glu83. The interval 87-144 (GDHHDHIVCVKCGEVTEFHNPEIEALQDKIAEENGYRIVDHALYMYGVCSDCQAKGKR) is dimerization. Residues His89 and Asp91 each coordinate Fe cation. His92, Cys95, Cys98, and Glu103 together coordinate Zn(2+). Residues Glu110 and His127 each contribute to the Fe cation site.

It belongs to the Fur family. In terms of assembly, homodimer.

It localises to the cytoplasm. Acts as a global negative controlling element, employing Fe(2+) as a cofactor to bind the operator of the repressed genes. Regulates the expression of the fbp protein. This Neisseria gonorrhoeae protein is Ferric uptake regulation protein (fur).